Reading from the N-terminus, the 2962-residue chain is Sex determination and dosage compensation protein sdc-2 (2962 aa).

Disordered regions lie at residues 1-28 (MSDESELGNQSEMESFNESDSPDEADPD) and 1061-1110 (DKRS…QVDP). The span at 15–27 (SFNESDSPDEADP) shows a compositional bias: acidic residues. Coiled coils occupy residues 995–1085 (LESA…LADK) and 1140–1268 (REER…KRVS). Disordered stretches follow at residues 1535–1554 (PASLNSEDSDSEDSREGSPV) and 2198–2227 (LDSSGSGRSTRCEIFEDSPSEDENDENQLD). Residues 2212–2225 (FEDSPSEDENDENQ) are compositionally biased toward acidic residues.

As to quaternary structure, component of the SDC complex, which consists of sdc-1, sdc-2 and sdc-3. Within the complex, interacts with sdc-1 and sdc-3. As to expression, expressed in hermaphrodites (XX), but absent in males (XO) (at protein level).

The protein localises to the chromosome. Its function is as follows. Component of the SDC complex that functions in sex determination and in X chromosome dosage compensation specifically in hermaphrodite (XX) animals. Required for the recruitment of the condensin I-like dosage compensation complex to the male sex-determining autosomal gene her-1, thereby contributing to its repression and initiating hermaphrodite sexual development. Plays a central role in X-chromosome recognition and in the recruitment and assembly of the dosage compensation complex and the dosage compensation protein dpy-21 onto the X chromosomes in hermaphrodites, which leads to a reduction of X-linked gene transcription and an equalization of X-linked gene expression between the sexes. May confer protection against toxicity induced by heavy metals such as arsenite. The chain is Sex determination and dosage compensation protein sdc-2 from Caenorhabditis elegans.